The following is a 955-amino-acid chain: Serine-aspartate repeat-containing protein C (955 aa).

Positions 1 to 50 (MNNKKTVTNRKGMIPNRLNKFSIRKYSVGTASILVGTTLIFGLSGHEAKA) are cleaved as a signal peptide. The tract at residues 51–166 (AEHTNGELNQ…TPKTTTIKPR (116 aa)) is disordered. Residues 51 to 495 (AEHTNGELNQ…GSSTANGDQK (445 aa)) form a ligand binding A region region. The span at 56–71 (GELNQSKNETTAPSEN) shows a compositional bias: polar residues. Positions 72 to 83 (KTTEKVDSHQLK) are enriched in basic and acidic residues. Residues 84–114 (DNTQTATADQPKVTMSDSATFKETSSNMQSP) are compositionally biased toward polar residues. The span at 115-132 (QNATASQSTTQTSNVTTN) shows a compositional bias: low complexity. Positions 133 to 164 (DKSSTTYSNETDKSNLTQAKDVSATPKTTTIK) are enriched in polar residues. CNA-B domains lie at 496–606 (KYNL…YKTP) and 607–717 (KYSL…EEET). The tract at residues 678-935 (TQTGTNTTED…NNSNNGTLFG (258 aa)) is disordered. 2 stretches are compositionally biased toward acidic residues: residues 685–695 (TEDDKDADGGE) and 712–894 (YYEE…DSDS). Residues 918–922 (LPETG) carry the LPXTG sorting signal motif. Over residues 920–935 (ETGSENNNSNNGTLFG) the composition is skewed to low complexity. Residue Thr-921 is modified to Pentaglycyl murein peptidoglycan amidated threonine. A propeptide spans 922–955 (GSENNNSNNGTLFGGLFAALGSLLLFGRRKKQNK) (removed by sortase).

It belongs to the serine-aspartate repeat-containing protein (SDr) family. In terms of assembly, homodimerizes; via N2-Domain. Interacts with host NRXN1; this interaction mediates bacterial attachment to host cells.

Its subcellular location is the secreted. It localises to the cell wall. In terms of biological role, cell surface-associated calcium-binding protein which plays an important role in adhesion and pathogenesis. Mediates interactions with components of the extracellular matrix such as host NRXN1 to promote bacterial adhesion. The chain is Serine-aspartate repeat-containing protein C (sdrC) from Staphylococcus aureus (strain MW2).